The primary structure comprises 266 residues: Large ribosomal subunit protein uL2m (266 aa).

Belongs to the universal ribosomal protein uL2 family.

The protein localises to the mitochondrion. This is Large ribosomal subunit protein uL2m (mrpl2) from Dictyostelium discoideum (Social amoeba).